The primary structure comprises 620 residues: Chaperone protein DnaK (620 aa).

Thr-197 carries the phosphothreonine; by autocatalysis modification. A disordered region spans residues 591-620; that stretch reads AQKLGEAMANKNNAEQPKKKDDDVIDAEVE.

This sequence belongs to the heat shock protein 70 family.

Functionally, acts as a chaperone. The polypeptide is Chaperone protein DnaK (Helicobacter pylori (strain HPAG1)).